Here is a 391-residue protein sequence, read N- to C-terminus: Esterase (391 aa).

A signal peptide spans Met1 to Ala26. The Nucleophile role is filled by Ser41. 3 N-linked (GlcNAc...) asparagine glycosylation sites follow: Asn186, Asn193, and Asn313. Residues Asp347 and His350 contribute to the active site.

This sequence belongs to the 'GDSL' lipolytic enzyme family. Post-translationally, the N-terminus is blocked. Glycosylated.

Has lipase and esterase activities. May be involved in plant defense. The protein is Esterase of Hevea brasiliensis (Para rubber tree).